Reading from the N-terminus, the 361-residue chain is Chorismate synthase (361 aa).

NADP(+)-binding residues include arginine 48 and arginine 54. FMN contacts are provided by residues 125 to 127 (RSS), 238 to 239 (NA), glycine 278, 293 to 297 (KPTSS), and arginine 319.

It belongs to the chorismate synthase family. Homotetramer. Requires FMNH2 as cofactor.

It carries out the reaction 5-O-(1-carboxyvinyl)-3-phosphoshikimate = chorismate + phosphate. It functions in the pathway metabolic intermediate biosynthesis; chorismate biosynthesis; chorismate from D-erythrose 4-phosphate and phosphoenolpyruvate: step 7/7. In terms of biological role, catalyzes the anti-1,4-elimination of the C-3 phosphate and the C-6 proR hydrogen from 5-enolpyruvylshikimate-3-phosphate (EPSP) to yield chorismate, which is the branch point compound that serves as the starting substrate for the three terminal pathways of aromatic amino acid biosynthesis. This reaction introduces a second double bond into the aromatic ring system. The chain is Chorismate synthase from Yersinia pseudotuberculosis serotype O:1b (strain IP 31758).